The following is a 497-amino-acid chain: Tripartite motif-containing protein 5 (497 aa).

Alanine 2 carries the N-acetylalanine modification. The RING-type zinc finger occupies 15 to 60; it reads CPICLELLTEPLSLPCGHSFCQACITANHRKSMLYKEGERSCPVCR. Residue serine 87 is modified to Phosphoserine. The B box-type zinc finger occupies 92 to 133; the sequence is LKVDHCARHGEKLLLFCQEDSKVICWLCERSQEHRGHHTFLM. Cysteine 97, histidine 100, cysteine 119, and histidine 125 together coordinate Zn(2+). Positions 137 to 225 form a coiled coil; that stretch reads AQEYHVKLQT…LTKSETEMVQ (89 aa). Residues 187–200 form a required for interaction with GABARAP and for autophagy region; the sequence is FEQLREILDWEESN. The B30.2/SPRY domain occupies 283–497; it reads LKGMLDMFRE…VPMTLCSPSS (215 aa).

This sequence belongs to the TRIM/RBCC family. As to quaternary structure, can form homodimers and homotrimers. In addition to lower-order dimerization, also exhibits a higher-order multimerization and both low- and high-order multimerizations are essential for its restriction activity. Interacts with BTBD1 and BTBD2. Interacts with PSMC4, PSMC5, PSMD7 and HSPA8/HSC70. Interacts (via B30.2/SPRY domain) with HSPA1A/B. Interacts with PSMC2, MAP3K7/TAK1, TAB2 and TAB3. Interacts with SQSTM1. Interacts with TRIM6 and TRIM34. Interacts with ULK1 (phosphorylated form), GABARAP, GABARAPL1, GABARAPL2, MAP1LC3A, MAP1LC3C and BECN1. Degraded in a proteasome-independent fashion in the absence of viral infection but in a proteasome-dependent fashion following exposure to restriction sensitive virus. Post-translationally, autoubiquitinated in a RING finger- and UBE2D2-dependent manner. Monoubiquitinated by TRIM21. Deubiquitinated by Yersinia YopJ. Ubiquitination may not lead to proteasomal degradation.

The protein localises to the cytoplasm. Its subcellular location is the nucleus. It catalyses the reaction S-ubiquitinyl-[E2 ubiquitin-conjugating enzyme]-L-cysteine + [acceptor protein]-L-lysine = [E2 ubiquitin-conjugating enzyme]-L-cysteine + N(6)-ubiquitinyl-[acceptor protein]-L-lysine.. It functions in the pathway protein modification; protein ubiquitination. Its function is as follows. Capsid-specific restriction factor that prevents infection from non-host-adapted retroviruses. Blocks viral replication early in the life cycle, after viral entry but before reverse transcription. In addition to acting as a capsid-specific restriction factor, also acts as a pattern recognition receptor that activates innate immune signaling in response to the retroviral capsid lattice. Binding to the viral capsid triggers its E3 ubiquitin ligase activity, and in concert with the heterodimeric ubiquitin conjugating enzyme complex UBE2V1-UBE2N (also known as UBC13-UEV1A complex) generates 'Lys-63'-linked polyubiquitin chains, which in turn are catalysts in the autophosphorylation of the MAP3K7/TAK1 complex (includes TAK1, TAB2, and TAB3). Activation of the MAP3K7/TAK1 complex by autophosphorylation results in the induction and expression of NF-kappa-B and MAPK-responsive inflammatory genes, thereby leading to an innate immune response in the infected cell. Plays a role in regulating autophagy through activation of autophagy regulator BECN1 by causing its dissociation from its inhibitors BCL2 and TAB2. This Papio anubis (Olive baboon) protein is Tripartite motif-containing protein 5 (TRIM5).